A 521-amino-acid chain; its full sequence is Signal recognition particle protein (521 aa).

GTP-binding positions include 107 to 114 (GLQGSGKT), 196 to 200 (DTAGR), and 254 to 257 (TKLD). Residues 436–505 (GGMGIPGMGR…MPDGLNELPP (70 aa)) form a disordered region. A compositionally biased stretch (basic residues) spans 447-462 (SATRKSKGGKGKKRAR).

Belongs to the GTP-binding SRP family. SRP54 subfamily. As to quaternary structure, part of the signal recognition particle protein translocation system, which is composed of SRP and FtsY.

The protein resides in the cytoplasm. The catalysed reaction is GTP + H2O = GDP + phosphate + H(+). Functionally, involved in targeting and insertion of nascent membrane proteins into the cytoplasmic membrane. Binds to the hydrophobic signal sequence of the ribosome-nascent chain (RNC) as it emerges from the ribosomes. The SRP-RNC complex is then targeted to the cytoplasmic membrane where it interacts with the SRP receptor FtsY. The sequence is that of Signal recognition particle protein from Mycobacterium leprae (strain TN).